The following is a 1082-amino-acid chain: SURP and G-patch domain-containing protein 2 (1082 aa).

T7 is subject to Phosphothreonine. The disordered stretch occupies residues 65–97 (LSGSVAHSRDAGREGLRSDVFPGPSFRSSNPSI). Over residues 71-81 (HSRDAGREGLR) the composition is skewed to basic and acidic residues. Phosphoserine is present on residues S96 and S224. A Glycyl lysine isopeptide (Lys-Gly) (interchain with G-Cter in SUMO2) cross-link involves residue K228. T275 bears the Phosphothreonine mark. S277 carries the phosphoserine modification. A Glycyl lysine isopeptide (Lys-Gly) (interchain with G-Cter in SUMO2) cross-link involves residue K305. A phosphoserine mark is found at S315, S573, and S603. One copy of the SURP motif 1 repeat lies at 590–633 (IDQLVKRVIEGSLSPKERTLLKEDPAYWFLSDENSLEYKYYKLK). Residue K650 forms a Glycyl lysine isopeptide (Lys-Gly) (interchain with G-Cter in SUMO2) linkage. Positions 694–779 (RRATTGTQTL…QTSSPCPSAD (86 aa)) are disordered. Residues 697–708 (TTGTQTLLSSGT) show a composition bias toward low complexity. Residues 727 to 738 (LPDRNDAAKDCP) show a composition bias toward basic and acidic residues. Phosphoserine is present on residues S754 and S757. One copy of the SURP motif 2 repeat lies at 787–830 (TAEKLARFVAQVGPEIEQFSIENSTDNPDLWFLHDQNSSAFKFY). Disordered stretches follow at residues 849–930 (NLHT…EAAE), 982–1002 (RIAYDRPRGRPMSKKKKPKDL), and 1030–1061 (LGSLGKGIREPVSVGTPSEGEGLGADGQEHKE). S863 is subject to Phosphoserine. Acidic residues-rich tracts occupy residues 868-877 (MEGEAEFEDE) and 885-904 (LESPEVMPEEEDEDDEDGGE). A compositionally biased stretch (basic residues) spans 990–999 (GRPMSKKKKP). The short motif at 995–1000 (KKKKPK) is the Nuclear localization signal element. A G-patch domain is found at 1011–1057 (DKNLGFQMLQKMGWKEGHGLGSLGKGIREPVSVGTPSEGEGLGADGQ).

In terms of tissue distribution, detected in adult testis, and in fetal brain and kidney.

It localises to the nucleus. Its function is as follows. May play a role in mRNA splicing. In Homo sapiens (Human), this protein is SURP and G-patch domain-containing protein 2 (SUGP2).